The sequence spans 196 residues: ATP-dependent Clp protease proteolytic subunit 1 (196 aa).

Ser-96 functions as the Nucleophile in the catalytic mechanism. The active site involves His-121.

Belongs to the peptidase S14 family. In terms of assembly, fourteen ClpP subunits assemble into 2 heptameric rings which stack back to back to give a disk-like structure with a central cavity, resembling the structure of eukaryotic proteasomes.

It localises to the cytoplasm. It carries out the reaction Hydrolysis of proteins to small peptides in the presence of ATP and magnesium. alpha-casein is the usual test substrate. In the absence of ATP, only oligopeptides shorter than five residues are hydrolyzed (such as succinyl-Leu-Tyr-|-NHMec, and Leu-Tyr-Leu-|-Tyr-Trp, in which cleavage of the -Tyr-|-Leu- and -Tyr-|-Trp bonds also occurs).. Its function is as follows. Cleaves peptides in various proteins in a process that requires ATP hydrolysis. Has a chymotrypsin-like activity. Plays a major role in the degradation of misfolded proteins. The chain is ATP-dependent Clp protease proteolytic subunit 1 from Prochlorococcus marinus subsp. pastoris (strain CCMP1986 / NIES-2087 / MED4).